Reading from the N-terminus, the 740-residue chain is Ion-translocating oxidoreductase complex subunit C (740 aa).

2 consecutive 4Fe-4S ferredoxin-type domains span residues 369–397 (GEPQ…QQLY) and 407–436 (KATT…VQYF). [4Fe-4S] cluster is bound by residues Cys377, Cys380, Cys383, Cys387, Cys416, Cys419, Cys422, and Cys426. A disordered region spans residues 602–716 (KLEQQQANAE…EPEEQVDPRK (115 aa)).

The protein belongs to the 4Fe4S bacterial-type ferredoxin family. RnfC subfamily. The complex is composed of six subunits: RsxA, RsxB, RsxC, RsxD, RsxE and RsxG. Requires [4Fe-4S] cluster as cofactor.

It is found in the cell inner membrane. Part of a membrane-bound complex that couples electron transfer with translocation of ions across the membrane. Required to maintain the reduced state of SoxR. This chain is Ion-translocating oxidoreductase complex subunit C, found in Escherichia coli (strain SE11).